The following is a 448-amino-acid chain: Phosphoglucosamine mutase (448 aa).

Serine 99 acts as the Phosphoserine intermediate in catalysis. Positions 99, 239, 241, and 243 each coordinate Mg(2+). Serine 99 is subject to Phosphoserine.

It belongs to the phosphohexose mutase family. It depends on Mg(2+) as a cofactor. In terms of processing, activated by phosphorylation.

It catalyses the reaction alpha-D-glucosamine 1-phosphate = D-glucosamine 6-phosphate. In terms of biological role, catalyzes the conversion of glucosamine-6-phosphate to glucosamine-1-phosphate. The chain is Phosphoglucosamine mutase from Lachnoclostridium phytofermentans (strain ATCC 700394 / DSM 18823 / ISDg) (Clostridium phytofermentans).